The sequence spans 559 residues: Dihydroxy-acid dehydratase (559 aa).

Asp-81 is a binding site for Mg(2+). Cys-122 contributes to the [2Fe-2S] cluster binding site. Residues Asp-123 and Lys-124 each contribute to the Mg(2+) site. Lys-124 bears the N6-carboxylysine mark. Residue Cys-195 participates in [2Fe-2S] cluster binding. Glu-448 is a binding site for Mg(2+). Ser-474 acts as the Proton acceptor in catalysis.

It belongs to the IlvD/Edd family. In terms of assembly, homodimer. [2Fe-2S] cluster is required as a cofactor. It depends on Mg(2+) as a cofactor.

The catalysed reaction is (2R)-2,3-dihydroxy-3-methylbutanoate = 3-methyl-2-oxobutanoate + H2O. It catalyses the reaction (2R,3R)-2,3-dihydroxy-3-methylpentanoate = (S)-3-methyl-2-oxopentanoate + H2O. The protein operates within amino-acid biosynthesis; L-isoleucine biosynthesis; L-isoleucine from 2-oxobutanoate: step 3/4. It functions in the pathway amino-acid biosynthesis; L-valine biosynthesis; L-valine from pyruvate: step 3/4. In terms of biological role, functions in the biosynthesis of branched-chain amino acids. Catalyzes the dehydration of (2R,3R)-2,3-dihydroxy-3-methylpentanoate (2,3-dihydroxy-3-methylvalerate) into 2-oxo-3-methylpentanoate (2-oxo-3-methylvalerate) and of (2R)-2,3-dihydroxy-3-methylbutanoate (2,3-dihydroxyisovalerate) into 2-oxo-3-methylbutanoate (2-oxoisovalerate), the penultimate precursor to L-isoleucine and L-valine, respectively. In Geobacillus kaustophilus (strain HTA426), this protein is Dihydroxy-acid dehydratase.